The following is a 680-amino-acid chain: Probable galacturonosyltransferase 3 (680 aa).

Residues 1–6 (MTTFST) are Cytoplasmic-facing. A helical; Signal-anchor for type II membrane protein transmembrane segment spans residues 7–27 (CAAFLSLVVVLHAVHVGGAIL). Residues 28–680 (ESQAPHRELK…PYLRRCDINE (653 aa)) lie on the Lumenal side of the membrane. A disordered region spans residues 118–146 (SFQNDTGMEDNASHSTTNQTDESENQFPN). Residues Asn121, Asn128, Asn135, Asn239, Asn386, Asn438, Asn545, Asn578, Asn610, and Asn631 are each glycosylated (N-linked (GlcNAc...) asparagine). A compositionally biased stretch (polar residues) spans 130-145 (SHSTTNQTDESENQFP).

This sequence belongs to the glycosyltransferase 8 family. As to expression, expressed in roots, inflorescences, siliques, leaves and stems.

The protein localises to the golgi apparatus membrane. Its pathway is glycan metabolism; pectin biosynthesis. May be involved in pectin and/or xylans biosynthesis in cell walls. The protein is Probable galacturonosyltransferase 3 (GAUT3) of Arabidopsis thaliana (Mouse-ear cress).